The following is a 183-amino-acid chain: GMP synthase [glutamine-hydrolyzing] subunit A (183 aa).

Positions 2–183 (KIYVIYNYGQ…YRNFIEICKK (182 aa)) constitute a Glutamine amidotransferase type-1 domain. Cys-74 functions as the Nucleophile in the catalytic mechanism. Active-site residues include His-161 and Glu-163.

In terms of assembly, heterodimer composed of a glutamine amidotransferase subunit (A) and a GMP-binding subunit (B).

The enzyme catalyses XMP + L-glutamine + ATP + H2O = GMP + L-glutamate + AMP + diphosphate + 2 H(+). Its pathway is purine metabolism; GMP biosynthesis; GMP from XMP (L-Gln route): step 1/1. Catalyzes the synthesis of GMP from XMP. This Archaeoglobus fulgidus (strain ATCC 49558 / DSM 4304 / JCM 9628 / NBRC 100126 / VC-16) protein is GMP synthase [glutamine-hydrolyzing] subunit A.